A 1341-amino-acid polypeptide reads, in one-letter code: WD repeat-containing protein 19 (1341 aa).

WD repeat units lie at residues S11–I51, S52–L92, G95–V134, K137–T175, D273–A311, and D317–A356. TPR repeat units follow at residues A736 to L769, P775 to E808, R840 to A873, P895 to I928, L951 to F984, and E1020 to V1053.

As to quaternary structure, component of the IFT complex A (IFT-A) complex. IFT-A complex is divided into a core subcomplex composed of IFT122:IFT140:WDR19 which is associated with TULP3 and a peripheral subcomplex composed of IFT43:WDR35:TTC21B. Interacts (via C-terminal region) with IFT122 (via C-terminal region). Interacts with BBS1. Interacts with TTC25. As to expression, tissue-specific expression of isoforms. Expressed in the prostate, testis, epididymis, submaxillary and salivary glands. Expressed in ependymal cells lining brain ventricles (at protein level).

It is found in the cell projection. The protein resides in the cilium. It localises to the cytoplasm. The protein localises to the cytoskeleton. Its subcellular location is the cilium basal body. It is found in the photoreceptor outer segment. The protein resides in the flagellum. In terms of biological role, as component of the IFT complex A (IFT-A), a complex required for retrograde ciliary transport and entry into cilia of G protein-coupled receptors (GPCRs), it is involved in cilia function and/or assembly. Essential for functional IFT-A assembly and ciliary entry of GPCRs. Associates with the BBSome complex to mediate ciliary transport. This Mus musculus (Mouse) protein is WD repeat-containing protein 19.